Reading from the N-terminus, the 736-residue chain is Protein kinase C epsilon type (736 aa).

Positions 1–117 constitute a C2 domain; sequence MVVFNGLLKI…NGSRHFEDWI (117 aa). The residue at position 62 (Ser-62) is a Phosphoserine. The segment at 169 to 220 adopts a Phorbol-ester/DAG-type 1 zinc-finger fold; sequence GHKFMATYLRQPTYCSHCRDFIWGVIGKQGYQCQVCTCVVHKRCHELIITKV. Thr-228 is subject to Phosphothreonine. The residue at position 234 (Ser-234) is a Phosphoserine. The segment at 242-292 adopts a Phorbol-ester/DAG-type 2 zinc-finger fold; it reads PHKFGIHNYKVPTFCDHCGSLLWGLLRQGLQCKVCKMNVHRRCETNVAPNC. The residue at position 309 (Thr-309) is a Phosphothreonine. Residues 310–356 are disordered; that stretch reads PDKITNSGQRRKKLIGGAESPQPTSGSSPSEEDRSKSAPTSPCDQEL. Phosphoserine occurs at positions 316, 329, and 337. The residue at position 346 (Ser-346) is a Phosphoserine; by GSK3-beta. Thr-349 is subject to Phosphothreonine. Ser-350 carries the post-translational modification Phosphoserine; by MAPK11 and MAPK14. Position 368 is a phosphoserine; by autocatalysis (Ser-368). The tract at residues 369-397 is disordered; sequence FDNRGEEHRAASSTDGQLGSPENGEVRQG. A Phosphoserine modification is found at Ser-388. Residues 407–667 enclose the Protein kinase domain; the sequence is FNFIKVLGKG…EDAIKQHPFF (261 aa). ATP contacts are provided by residues 413 to 421 and Lys-436; that span reads LGKGSFGKV. The Proton acceptor role is filled by Asp-531. Phosphothreonine; by PDPK1 is present on Thr-565. One can recognise an AGC-kinase C-terminal domain in the interval 668-736; the sequence is KEIDWVLLEQ…FSYFGEDLMP (69 aa). A Phosphothreonine modification is found at Thr-702. Phosphothreonine; by autocatalysis is present on Thr-709. Residue Ser-728 is modified to Phosphoserine; by autocatalysis.

This sequence belongs to the protein kinase superfamily. AGC Ser/Thr protein kinase family. PKC subfamily. In terms of assembly, forms a ternary complex with TRIM63 and RACK1/GN2BL1. Can form a complex with PDLIM5 and N-type calcium channel. Interacts with COPB1. Interacts with DGKQ. Interacts with STAT3. Interacts with YWHAB. Interacts with HSP90AB1; promotes functional activation in a heat shock-dependent manner. Interacts (via phorbol-ester/DAG-type 2 domain) with PRPH and VIM. Interacts with NLRP5/MATER. Phosphorylation on Thr-565 by PDPK1 triggers autophosphorylation on Ser-728. Phosphorylation in the hinge domain at Ser-350 by MAPK11 or MAPK14, Ser-346 by GSK3B and Ser-368 by autophosphorylation is required for interaction with YWHAB. In response to growth factors, phosphorylated at Thr-702 and Ser-728 by the mTORC2 complex, promoting autophosphorylation and activation of PRKCE.

It localises to the cytoplasm. Its subcellular location is the cytoskeleton. The protein resides in the cell membrane. It is found in the perinuclear region. The protein localises to the nucleus. It catalyses the reaction L-seryl-[protein] + ATP = O-phospho-L-seryl-[protein] + ADP + H(+). The enzyme catalyses L-threonyl-[protein] + ATP = O-phospho-L-threonyl-[protein] + ADP + H(+). Its activity is regulated as follows. Novel PKCs (PRKCD, PRKCE, PRKCH and PRKCQ) are calcium-insensitive, but activated by diacylglycerol (DAG) and phosphatidylserine. Three specific sites; Thr-565 (activation loop of the kinase domain), Thr-709 (turn motif) and Ser-728 (hydrophobic region), need to be phosphorylated for its full activation. Functionally, calcium-independent, phospholipid- and diacylglycerol (DAG)-dependent serine/threonine-protein kinase that plays essential roles in the regulation of multiple cellular processes linked to cytoskeletal proteins, such as cell adhesion, motility, migration and cell cycle, functions in neuron growth and ion channel regulation, and is involved in immune response, cancer cell invasion and regulation of apoptosis. Mediates cell adhesion to the extracellular matrix via integrin-dependent signaling, by mediating angiotensin-2-induced activation of integrin beta-1 (ITGB1) in cardiac fibroblasts. Phosphorylates MARCKS, which phosphorylates and activates PTK2/FAK, leading to the spread of cardiomyocytes. Involved in the control of the directional transport of ITGB1 in mesenchymal cells by phosphorylating vimentin (VIM), an intermediate filament (IF) protein. In epithelial cells, associates with and phosphorylates keratin-8 (KRT8), which induces targeting of desmoplakin at desmosomes and regulates cell-cell contact. Phosphorylates IQGAP1, which binds to CDC42, mediating epithelial cell-cell detachment prior to migration. During cytokinesis, forms a complex with YWHAB, which is crucial for daughter cell separation, and facilitates abscission by a mechanism which may implicate the regulation of RHOA. In cardiac myocytes, regulates myofilament function and excitation coupling at the Z-lines, where it is indirectly associated with F-actin via interaction with COPB1. During endothelin-induced cardiomyocyte hypertrophy, mediates activation of PTK2/FAK, which is critical for cardiomyocyte survival and regulation of sarcomere length. Plays a role in the pathogenesis of dilated cardiomyopathy via persistent phosphorylation of troponin I (TNNI3). Involved in nerve growth factor (NFG)-induced neurite outgrowth and neuron morphological change independently of its kinase activity, by inhibition of RHOA pathway, activation of CDC42 and cytoskeletal rearrangement. May be involved in presynaptic facilitation by mediating phorbol ester-induced synaptic potentiation. Phosphorylates gamma-aminobutyric acid receptor subunit gamma-2 (GABRG2), which reduces the response of GABA receptors to ethanol and benzodiazepines and may mediate acute tolerance to the intoxicating effects of ethanol. Upon PMA treatment, phosphorylates the capsaicin- and heat-activated cation channel TRPV1, which is required for bradykinin-induced sensitization of the heat response in nociceptive neurons. Is able to form a complex with PDLIM5 and N-type calcium channel, and may enhance channel activities and potentiates fast synaptic transmission by phosphorylating the pore-forming alpha subunit CACNA1B (CaV2.2). Downstream of TLR4, plays an important role in the lipopolysaccharide (LPS)-induced immune response by phosphorylating and activating TICAM2/TRAM, which in turn activates the transcription factor IRF3 and subsequent cytokines production. In differentiating erythroid progenitors, is regulated by EPO and controls the protection against the TNFSF10/TRAIL-mediated apoptosis, via BCL2. May be involved in the regulation of the insulin-induced phosphorylation and activation of AKT1. Phosphorylates NLRP5/MATER and may thereby modulate AKT pathway activation in cumulus cells. Phosphorylates and activates LRRK1, which phosphorylates RAB proteins involved in intracellular trafficking. The protein is Protein kinase C epsilon type (PRKCE) of Oryctolagus cuniculus (Rabbit).